We begin with the raw amino-acid sequence, 573 residues long: uncharacterized protein (573 aa).

An ABC transmembrane type-1 domain is found at 15–298 (AGIALILMLT…FPFLIMIFTR (284 aa)). 6 consecutive transmembrane segments (helical) span residues 17–37 (IALI…LLIA), 52–72 (VWIW…AGML), 127–147 (IFMS…GIVL), 153–173 (VKLG…LLWV), 238–258 (FTMP…LWAG), and 275–295 (IINY…LIMI). Positions 330-563 (IEFQHVSFRY…SQLYKRIYES (234 aa)) constitute an ABC transporter domain. 364 to 371 (GATGSGKS) is a binding site for ATP.

The protein belongs to the ABC transporter superfamily.

It is found in the cell membrane. This is an uncharacterized protein from Bacillus subtilis (strain 168).